The following is a 122-amino-acid chain: Large ribosomal subunit protein uL14 (122 aa).

Belongs to the universal ribosomal protein uL14 family. Part of the 50S ribosomal subunit. Forms a cluster with proteins L3 and L19. In the 70S ribosome, L14 and L19 interact and together make contacts with the 16S rRNA in bridges B5 and B8.

In terms of biological role, binds to 23S rRNA. Forms part of two intersubunit bridges in the 70S ribosome. This is Large ribosomal subunit protein uL14 from Methylobacterium sp. (strain 4-46).